We begin with the raw amino-acid sequence, 538 residues long: 2-isopropylmalate synthase (538 aa).

The region spanning 6–277 (LIIFDTTLRD…DSTVPLSTID (272 aa)) is the Pyruvate carboxyltransferase domain. The Mn(2+) site is built by Asp-15, His-206, His-208, and Asn-242. A regulatory domain region spans residues 406 to 538 (RLEQVQVSCG…AHPDAAAQKL (133 aa)).

Belongs to the alpha-IPM synthase/homocitrate synthase family. LeuA type 1 subfamily. As to quaternary structure, homodimer. It depends on Mn(2+) as a cofactor.

It localises to the cytoplasm. The catalysed reaction is 3-methyl-2-oxobutanoate + acetyl-CoA + H2O = (2S)-2-isopropylmalate + CoA + H(+). The protein operates within amino-acid biosynthesis; L-leucine biosynthesis; L-leucine from 3-methyl-2-oxobutanoate: step 1/4. Catalyzes the condensation of the acetyl group of acetyl-CoA with 3-methyl-2-oxobutanoate (2-ketoisovalerate) to form 3-carboxy-3-hydroxy-4-methylpentanoate (2-isopropylmalate). The polypeptide is 2-isopropylmalate synthase (Gloeobacter violaceus (strain ATCC 29082 / PCC 7421)).